The primary structure comprises 576 residues: Arginine--tRNA ligase (576 aa).

Positions 132 to 142 match the 'HIGH' region motif; sequence ANPTGPMHIGH.

It belongs to the class-I aminoacyl-tRNA synthetase family. Monomer.

The protein localises to the cytoplasm. It carries out the reaction tRNA(Arg) + L-arginine + ATP = L-arginyl-tRNA(Arg) + AMP + diphosphate. This chain is Arginine--tRNA ligase, found in Ehrlichia ruminantium (strain Welgevonden).